Reading from the N-terminus, the 237-residue chain is Sulfolipid-1 exporter Sap (237 aa).

6 consecutive transmembrane segments (helical) span residues 5–25 (VLVL…VVLM), 38–58 (FLCG…VVLG), 66–86 (FSVA…AFAL), 141–161 (VSGL…AAIL), 171–191 (ALAV…PLVS), and 217–237 (DAAL…LSNL).

The protein belongs to the peptidoglycolipid addressing protein (GAP) (TC 2.A.116) family.

It is found in the cell inner membrane. Functionally, required for the transport across the inner membrane of sulfolipid-1 (SL-1), which is a major cell wall lipid of pathogenic mycobacteria. Could also transport SL1278 (2-palmitoyl-3-(C43)-phthioceranyl-alpha, alpha'-D-trehalose-2'-sulfate), which is the precursor of SL-1. May potentiate SL-1 levels and confer specificity for sulfolipids over structurally similar glycolipids. The polypeptide is Sulfolipid-1 exporter Sap (Mycobacterium tuberculosis (strain ATCC 25618 / H37Rv)).